Here is a 336-residue protein sequence, read N- to C-terminus: UPF0104 membrane protein MJ1595 (336 aa).

Helical transmembrane passes span 9–29 (STILLIISFLFILAIMAYIGL), 40–60 (NPEYVILAFILQILVSVILSA), 68–88 (ILGYSANFKNIFLLVLMGLFI), 127–147 (VLDTAIFLFFTLFVIGYFVVT), 154–174 (YLILSWIFLFSLTAIIIYLIA), 223–243 (WEVVVAIFLSVMRYIFDILKL), 245–265 (LLFLSLSYVVSVICVSAVYLI), 285–305 (VMILSFSAFNIPPSVAAAVTL), and 306–326 (LDRLVSYILPTILGYIAMLII).

The protein belongs to the UPF0104 family.

The protein resides in the cell membrane. The protein is UPF0104 membrane protein MJ1595 of Methanocaldococcus jannaschii (strain ATCC 43067 / DSM 2661 / JAL-1 / JCM 10045 / NBRC 100440) (Methanococcus jannaschii).